The chain runs to 1894 residues: Plexin-A1 (1894 aa).

The first 27 residues, 1–27 (MPLPPLSSRTLLLLLLLLLRGVWIAIS), serve as a signal peptide directing secretion. Residues 28 to 510 (SPPAGLGPQP…TEKQVTQVPV (483 aa)) form the Sema domain. Residues 28–1242 (SPPAGLGPQP…VYSDSLLTLP (1215 aa)) are Extracellular-facing. A glycan (N-linked (GlcNAc...) asparagine) is linked at Asn-75. 10 disulfide bridges follow: Cys-93/Cys-102, Cys-128/Cys-136, Cys-284/Cys-405, Cys-300/Cys-356, Cys-374/Cys-393, Cys-513/Cys-530, Cys-519/Cys-561, Cys-522/Cys-539, Cys-533/Cys-545, and Cys-596/Cys-615. N-linked (GlcNAc...) asparagine glycosylation is found at Asn-658, Asn-670, and Asn-699. IPT/TIG domains lie at 862-957 (PKIL…FTFV), 959-1043 (PTFY…YNYT), 1046-1145 (PTIL…FLYY), and 1148-1234 (PVLE…LQVY). N-linked (GlcNAc...) asparagine glycosylation occurs at Asn-1041. N-linked (GlcNAc...) asparagine glycosylation is found at Asn-1185 and Asn-1210. Residues 1243 to 1263 (AIVGIGGGGGLLLLVIVAVLI) form a helical membrane-spanning segment. Positions 1262 to 1315 (LIAYKRKSRDADRTLKRLQLQMDNLESRVALECKEAFAELQTDIHELTSDLDGA) form a coiled coil. Residues 1264–1894 (AYKRKSRDAD…QVVDTMALSS (631 aa)) lie on the Cytoplasmic side of the membrane.

Belongs to the plexin family. As to quaternary structure, interacts directly with NRP1 and NRP2. Interacts with PLXN1B. Interacts with FARP2, RND1 and KDR/VEGFR2. Binding of SEMA3A leads to dissociation of FARP2. Interacts with CRMP1, DPYSL2/CRMP2, DPYSL3/CRMP3 and DPYSL4/CRMP4. Interacts (via TIG domains) with TREM2; the interaction mediates SEMA6D binding and signaling through TYROBP. As to expression, ubiquitous.

The protein resides in the cell membrane. In terms of biological role, coreceptor for SEMA3A, SEMA3C, SEMA3F and SEMA6D. Necessary for signaling by class 3 semaphorins and subsequent remodeling of the cytoskeleton. Plays a role in axon guidance, invasive growth and cell migration. Class 3 semaphorins bind to a complex composed of a neuropilin and a plexin. The plexin modulates the affinity of the complex for specific semaphorins, and its cytoplasmic domain is required for the activation of down-stream signaling events in the cytoplasm. Acts as coreceptor of TREM2 for SEMA6D in dendritic cells and is involved in the generation of immune responses and skeletal homeostasis. The polypeptide is Plexin-A1 (Plxna1) (Mus musculus (Mouse)).